The following is a 64-amino-acid chain: Conotoxin Im11.2 (64 aa).

The signal sequence occupies residues 1–26 (MMFRLTSVSCFLLVIVCLNLVVLTNA). Intrachain disulfides connect Cys-27-Cys-41, Cys-34-Cys-46, Cys-40-Cys-50, and Cys-45-Cys-54. At Asp-57 the chain carries Aspartic acid 1-amide. The propeptide occupies 61–64 (ATFQ).

Belongs to the conotoxin I2 superfamily. In terms of tissue distribution, expressed by the venom duct.

The protein localises to the secreted. This Conus imperialis (Imperial cone) protein is Conotoxin Im11.2.